Reading from the N-terminus, the 297-residue chain is Retroviral cyclin (297 aa).

Positions 21–113 (PVYWKELLNW…KPSLLLTETM (93 aa)) constitute a Cyclin N-terminal domain. Positions 21 to 113 (PVYWKELLNW…KPSLLLTETM (93 aa)) are transcription activation domain. Residues 222–270 (QINLDFAEAEQREAAERRALLEREREQQLQEARERLDDVMAVLEAEVAI) adopt a coiled-coil conformation.

The protein belongs to the cyclin family. As to quaternary structure, interacts (via transcription activation domain) with host TAF9 in vitro. Interacts with host CDK3 and CDK8.

Its subcellular location is the host nucleus. In terms of biological role, transforming protein which induces the development of dermal sarcomas. Induces positive and negative regulation of transcription from host and viral promoters by interacting with various cellular factors involved in protein transcription regulation. The protein is Retroviral cyclin (orfA) of Sander vitreus (Walleye).